The primary structure comprises 154 residues: Isotocin-neurophysin IT 1 (154 aa).

The first 20 residues, 1-20 (MSGSMFSVFSLLYLLSVCSA), serve as a signal peptide directing secretion. Cys-21 and Cys-26 are oxidised to a cystine. The residue at position 29 (Gly-29) is a Glycine amide. 7 cysteine pairs are disulfide-bonded: Cys-42/Cys-86, Cys-45/Cys-59, Cys-53/Cys-76, Cys-60/Cys-66, Cys-93/Cys-105, Cys-99/Cys-117, and Cys-106/Cys-111.

It belongs to the vasopressin/oxytocin family.

In terms of biological role, isotocin causes contraction of smooth muscles. This chain is Isotocin-neurophysin IT 1, found in Catostomus commersonii (White sucker).